The sequence spans 288 residues: Short chain aldehyde dehydrogenase 1 (288 aa).

NAD(+) is bound by residues 26-28 (SGI), aspartate 47, 72-73 (DV), and 99-101 (NAG). Serine 153 (proton donor) is an active-site residue. Residues serine 153 and tyrosine 166 each coordinate substrate. NAD(+) is bound by residues tyrosine 166, lysine 170, and threonine 201. Tyrosine 166 serves as the catalytic Proton acceptor. Catalysis depends on lysine 170, which acts as the Proton donor/acceptor.

This sequence belongs to the short-chain dehydrogenases/reductases (SDR) family. In terms of assembly, homodimer. In terms of tissue distribution, expressed in mature seeds.

It carries out the reaction 4,5,8-trihydroxycasbene + 2 NAD(+) = jolkinol C + 2 NADH + 2 H(+). The enzyme catalyses a secondary alcohol + NAD(+) = a ketone + NADH + H(+). It catalyses the reaction a primary alcohol + NAD(+) = an aldehyde + NADH + H(+). It participates in secondary metabolite biosynthesis; terpenoid biosynthesis. Involved in the biosynthesis of macrocyclic lathyrane type diterpenoids (also called Euphorbia factors) natural products, including the cyclization route from casbene to jolkinol C, a precursor for ingenol mebutate that is used to treat actinic keratosis, a precancerous skin condition. Catalyzes the conversion of 4,5,8-trihydroxycasbene into jolkinol C in presence of NAD. Also mediates the formation of casbene dione derivative and 4-ketocasbene from 4-hydroxy-8-ketocasbene and 4-hydroxycasbene, respectively. Together with CYP71D445, triggers the biosynthesis of 8-ketocasbene from 8-hydroxycasbene. The polypeptide is Short chain aldehyde dehydrogenase 1 (Euphorbia lathyris (Caper spurge)).